The primary structure comprises 72 residues: Translation initiation factor IF-1 (72 aa).

The S1-like domain occupies 1–72 (MSKDDVIQMQ…SRARIVFRAK (72 aa)).

The protein belongs to the IF-1 family. As to quaternary structure, component of the 30S ribosomal translation pre-initiation complex which assembles on the 30S ribosome in the order IF-2 and IF-3, IF-1 and N-formylmethionyl-tRNA(fMet); mRNA recruitment can occur at any time during PIC assembly.

Its subcellular location is the cytoplasm. Functionally, one of the essential components for the initiation of protein synthesis. Stabilizes the binding of IF-2 and IF-3 on the 30S subunit to which N-formylmethionyl-tRNA(fMet) subsequently binds. Helps modulate mRNA selection, yielding the 30S pre-initiation complex (PIC). Upon addition of the 50S ribosomal subunit IF-1, IF-2 and IF-3 are released leaving the mature 70S translation initiation complex. The chain is Translation initiation factor IF-1 from Methylibium petroleiphilum (strain ATCC BAA-1232 / LMG 22953 / PM1).